Reading from the N-terminus, the 548-residue chain is Multidrug efflux system permease protein Rv1217c (548 aa).

The next 12 membrane-spanning stretches (helical) occupy residues 39-59 (VSLP…YIAS), 99-119 (GIWK…LTVI), 148-168 (ALLL…LGLL), 178-198 (VAFG…AAVA), 210-230 (AVAF…DAGS), 253-273 (WWVL…AYRL), 313-333 (LLWT…VHGI), 359-379 (AFLA…AVSL), 410-430 (LAMA…AAGL), 450-470 (AAVQ…LFGL), 477-497 (VAWG…LAGF), and 521-541 (VPLL…AMAF).

In terms of assembly, the complex is probably composed of two ATP-binding proteins (Rv1218c) and a transmembrane protein (Rv1217c).

It localises to the cell inner membrane. Its function is as follows. Probably part of the ABC transporter complex Rv1217c-Rv1218c involved in the resistance to a wide range of structurally unrelated drugs. Probably responsible for the translocation of the substrate across the membrane. This is Multidrug efflux system permease protein Rv1217c from Mycobacterium tuberculosis (strain ATCC 25618 / H37Rv).